Reading from the N-terminus, the 289-residue chain is Early E4 34 kDa protein (289 aa).

The protein belongs to the adenoviridae E4 30 to 34 kDa protein family. As to quaternary structure, interacts with E1B-55k.

It is found in the host nucleus. It localises to the host cytoplasm. Its function is as follows. Plays a major role to prevent cellular inhibition of viral genome replication by nuclear bodies. Assembles an SCF-like E3 ubiquitin ligase complex based on the cellular proteins ELOB, ELOC, CUL5 and RBX1, in cooperation with viral E1B-55K. This viral RING-type ligase ubiquitinates cellular substrates prior to proteasomal degradation: p53/TP53, LIG4, MRE11-RAD50-NBS1 (MRN) complex, ITGA3, DAXX and BLM. The polypeptide is Early E4 34 kDa protein (Human adenovirus F serotype 40 (HAdV-40)).